The following is a 257-amino-acid chain: Thioredoxin-dependent peroxide reductase, mitochondrial (257 aa).

Residues 1 to 62 (MAAAAGRLLW…FAFSTSSSFH (62 aa)) constitute a mitochondrion transit peptide. A Thioredoxin domain is found at 64-222 (PAVTQHAPHF…PLRLVKAFQF (159 aa)). Position 84 is an N6-succinyllysine (lysine 84). Position 92 is an N6-acetyllysine; alternate (lysine 92). Lysine 92 is modified (N6-succinyllysine; alternate). Cysteine 109 functions as the Cysteine sulfenic acid (-SOH) intermediate in the catalytic mechanism. Threonine 147 carries the post-translational modification Phosphothreonine.

The protein belongs to the peroxiredoxin family. AhpC/Prx1 subfamily. Homodimer; disulfide-linked, upon oxidation. 6 homodimers assemble to form a ring-like dodecamer. Interacts with NEK6. Interacts with LRRK2. Interacts with MAP3K13. Interacts with RPS6KC1 (via PX domain). Phosphorylated by LRRK2; phosphorylation reduces perodixase activity. In terms of processing, the enzyme can be inactivated by further oxidation of the cysteine sulfenic acid (C(P)-SOH) to sulphinic acid (C(P)-SO2H) and sulphonic acid (C(P)-SO3H) instead of its condensation to a disulfide bond. Post-translationally, S-palmitoylated. Ubiquitous.

The protein localises to the mitochondrion. It localises to the cytoplasm. It is found in the early endosome. The catalysed reaction is a hydroperoxide + [thioredoxin]-dithiol = an alcohol + [thioredoxin]-disulfide + H2O. Thiol-specific peroxidase that catalyzes the reduction of hydrogen peroxide and organic hydroperoxides to water and alcohols, respectively. Plays a role in cell protection against oxidative stress by detoxifying peroxides. Acts synergistically with MAP3K13 to regulate the activation of NF-kappa-B in the cytosol. Required for the maintenance of physical strength. In Rattus norvegicus (Rat), this protein is Thioredoxin-dependent peroxide reductase, mitochondrial (Prdx3).